An 82-amino-acid chain; its full sequence is ATP synthase subunit 9, mitochondrial (82 aa).

Transmembrane regions (helical) follow at residues 8 to 28 (IGAG…GNVF) and 45 to 67 (SFGY…PMMA).

The protein belongs to the ATPase C chain family. F-type ATPases have 2 components, CF(1) - the catalytic core - and CF(0) - the membrane proton channel. CF(1) has five subunits: alpha(3), beta(3), gamma(1), delta(1), epsilon(1). CF(0) has three main subunits: a, b and c.

Its subcellular location is the mitochondrion membrane. Functionally, this protein is one of the chains of the nonenzymatic membrane component (F0) of mitochondrial ATPase. The sequence is that of ATP synthase subunit 9, mitochondrial (ATP9) from Malus domestica (Apple).